We begin with the raw amino-acid sequence, 92 residues long: DNA-binding protein HU (92 aa).

The protein belongs to the bacterial histone-like protein family. As to quaternary structure, homodimer.

Its function is as follows. Histone-like DNA-binding protein which is capable of wrapping DNA to stabilize it, and thus to prevent its denaturation under extreme environmental conditions. In Buchnera aphidicola subsp. Baizongia pistaciae (strain Bp), this protein is DNA-binding protein HU (hup).